The following is a 502-amino-acid chain: Ubiquitin-like-specific protease 1A (502 aa).

Active-site residues include histidine 393, aspartate 410, and cysteine 461.

This sequence belongs to the peptidase C48 family.

In terms of biological role, protease that catalyzes two essential functions in the SUMO pathway: processing of full-length SUMOs to their mature forms and deconjugation of SUMO from targeted proteins. Cleaves precursors of SUM1 and SUM2, and very inefficiently of SUM3. Seems to be the only ULP1 able to cleave SUM3 precursors. Cleaves SUMO peptides better than SUMO-conjugated proteins. This Arabidopsis thaliana (Mouse-ear cress) protein is Ubiquitin-like-specific protease 1A (ULP1A).